A 345-amino-acid polypeptide reads, in one-letter code: Heat-inducible transcription repressor HrcA (345 aa).

This sequence belongs to the HrcA family.

Its function is as follows. Negative regulator of class I heat shock genes (grpE-dnaK-dnaJ and groELS operons). Prevents heat-shock induction of these operons. The polypeptide is Heat-inducible transcription repressor HrcA (Dehalococcoides mccartyi (strain ATCC BAA-2100 / JCM 16839 / KCTC 5957 / BAV1)).